The chain runs to 486 residues: UDP-N-acetylglucosamine pyrophosphorylase (486 aa).

Residues 109-112 carry the Substrate binding motif; sequence MAGG. UTP contacts are provided by residues 109–112, K123, Q199, and G226; that span reads MAGG. N227 contributes to the substrate binding site. Residue D257 coordinates UTP. Positions 309-310 match the Substrate binding motif; the sequence is EY. K389 is a UTP binding site. K421 provides a ligand contact to substrate.

Belongs to the UDPGP type 1 family.

Its subcellular location is the cytoplasm. It carries out the reaction N-acetyl-alpha-D-glucosamine 1-phosphate + UTP + H(+) = UDP-N-acetyl-alpha-D-glucosamine + diphosphate. Its pathway is nucleotide-sugar biosynthesis; UDP-N-acetyl-alpha-D-glucosamine biosynthesis; UDP-N-acetyl-alpha-D-glucosamine from N-acetyl-alpha-D-glucosamine 1-phosphate: step 1/1. The protein is UDP-N-acetylglucosamine pyrophosphorylase (UAP1) of Candida albicans (Yeast).